The sequence spans 346 residues: Phosphoribosylformylglycinamidine cyclo-ligase (346 aa).

It belongs to the AIR synthase family.

It localises to the cytoplasm. The catalysed reaction is 2-formamido-N(1)-(5-O-phospho-beta-D-ribosyl)acetamidine + ATP = 5-amino-1-(5-phospho-beta-D-ribosyl)imidazole + ADP + phosphate + H(+). The protein operates within purine metabolism; IMP biosynthesis via de novo pathway; 5-amino-1-(5-phospho-D-ribosyl)imidazole from N(2)-formyl-N(1)-(5-phospho-D-ribosyl)glycinamide: step 2/2. In Bacillus cereus (strain G9842), this protein is Phosphoribosylformylglycinamidine cyclo-ligase.